The following is a 509-amino-acid chain: Maturase K (509 aa).

It belongs to the intron maturase 2 family. MatK subfamily.

It localises to the plastid. The protein resides in the chloroplast. Functionally, usually encoded in the trnK tRNA gene intron. Probably assists in splicing its own and other chloroplast group II introns. In Thuja occidentalis (Northern white-cedar), this protein is Maturase K.